Reading from the N-terminus, the 309-residue chain is Homoserine kinase (309 aa).

91–101 (PVGSGLGSSAC) is a binding site for ATP.

Belongs to the GHMP kinase family. Homoserine kinase subfamily.

Its subcellular location is the cytoplasm. The enzyme catalyses L-homoserine + ATP = O-phospho-L-homoserine + ADP + H(+). It functions in the pathway amino-acid biosynthesis; L-threonine biosynthesis; L-threonine from L-aspartate: step 4/5. Its function is as follows. Catalyzes the ATP-dependent phosphorylation of L-homoserine to L-homoserine phosphate. The protein is Homoserine kinase of Hamiltonella defensa subsp. Acyrthosiphon pisum (strain 5AT).